The primary structure comprises 125 residues: Small ribosomal subunit protein bS6m (125 aa).

Belongs to the bacterial ribosomal protein bS6 family. In terms of assembly, component of the mitochondrial ribosome small subunit (28S) which comprises a 12S rRNA and about 30 distinct proteins.

It is found in the mitochondrion. This is Small ribosomal subunit protein bS6m (Mrps6) from Mus musculus (Mouse).